The following is a 143-amino-acid chain: Small ribosomal subunit protein bS6 (143 aa).

Residues 100 to 143 (SPIIKMKDERREVVELTTSGSEDNQKDHHKEDLDKKTDEFSEEN) are disordered. 2 stretches are compositionally biased toward basic and acidic residues: residues 104–113 (KMKDERREVV) and 122–143 (DNQKDHHKEDLDKKTDEFSEEN).

The protein belongs to the bacterial ribosomal protein bS6 family.

Functionally, binds together with bS18 to 16S ribosomal RNA. The chain is Small ribosomal subunit protein bS6 from Hamiltonella defensa subsp. Acyrthosiphon pisum (strain 5AT).